A 348-amino-acid chain; its full sequence is Rhodopsin (348 aa).

M1 bears the N-acetylmethionine mark. Residues 1-36 lie on the Extracellular side of the membrane; that stretch reads MNGTEGPNFYVPFSNKTGVVRSPFEYPQYYLAEPWQ. 2 N-linked (GlcNAc...) asparagine glycosylation sites follow: N2 and N15. A helical transmembrane segment spans residues 37 to 61; sequence FSMLAAYMFLLIVLGFPINFLTLYV. Residues 62–73 lie on the Cytoplasmic side of the membrane; sequence TVQHKNVRTPLN. The chain crosses the membrane as a helical span at residues 74–96; sequence YILLNLAVANHFMVFGGFTTTLY. The Extracellular segment spans residues 97–110; the sequence is TSLHGYFVFGSTGC. C110 and C187 are oxidised to a cystine. The chain crosses the membrane as a helical span at residues 111–133; that stretch reads NLEGFFATLGGEIALWSLVVLAI. The 'Ionic lock' involved in activated form stabilization signature appears at 134-136; that stretch reads ERY. The Cytoplasmic portion of the chain corresponds to 134–152; sequence ERYVVVCKPMSNFRFGENH. Residues 153-173 form a helical membrane-spanning segment; that stretch reads AIMGVAFTWVMALACAAPPLV. The Extracellular portion of the chain corresponds to 174 to 202; sequence GWSRYIPEGMQCSCGIDYYTLKPEVNNES. E201 provides a ligand contact to Zn(2+). The helical transmembrane segment at 203–224 threads the bilayer; that stretch reads FVIYMFVVHFTIPMTIIFFCYG. Over 225–252 the chain is Cytoplasmic; it reads QLVFTVKEAAAQQQESATTQKAEKEVTR. The helical transmembrane segment at 253-274 threads the bilayer; the sequence is MVIIMVIAFLICWVPYASVAFY. Residues 275–286 are Extracellular-facing; the sequence is IFTHQGSDFGPI. Q279 contributes to the Zn(2+) binding site. The helical transmembrane segment at 287-308 threads the bilayer; the sequence is LMTLPAFFAKSSAIYNPVIYIM. The residue at position 296 (K296) is an N6-(retinylidene)lysine. Topologically, residues 309-348 are cytoplasmic; it reads MNKQFRNCMLTTICCGKNPFGEEEGSTTASKTETSQVAPA. 2 S-palmitoyl cysteine lipidation sites follow: C322 and C323. Residues 330 to 348 form an interaction with SAG region; that stretch reads EEEGSTTASKTETSQVAPA. S334 is subject to Phosphoserine. 2 positions are modified to phosphothreonine: T335 and T336. S338 bears the Phosphoserine mark. Phosphothreonine occurs at positions 340 and 342. S343 bears the Phosphoserine mark.

The protein belongs to the G-protein coupled receptor 1 family. Opsin subfamily. Homodimer. May form a complex composed of RHO, GRK1 and RCVRN in a Ca(2+)-dependent manner; RCVRN prevents the interaction between GRK1 and RHO. Interacts with GRK1. Interacts (phosphorylated form) with SAG. Interacts with GNAT1. Interacts with GNAT3. SAG and G-proteins compete for a common binding site. Interacts with PRCD; the interaction promotes PRCD stability. Forms a complex with ASAP1 and ARF4. Forms a complex with ASAP1, RAB11A, Rabin8/RAB3IP, ARF4 and RAB11FIP3; the complex regulates Golgi-to-cilia rhodopsin/RHO transport in photoreceptors. In terms of processing, phosphorylated on some or all of the serine and threonine residues present in the C-terminal region. Contains one covalently linked retinal chromophore. Upon light absorption, the covalently bound 11-cis-retinal is converted to all-trans-retinal. After hydrolysis of the Schiff base and release of the covalently bound all-trans-retinal, active rhodopsin is regenerated by binding of a fresh molecule of 11-cis-retinal.

It localises to the membrane. It is found in the cell projection. The protein resides in the cilium. The protein localises to the photoreceptor outer segment. In terms of biological role, photoreceptor required for image-forming vision at low light intensity. Required for photoreceptor cell viability after birth. Light-induced isomerization of 11-cis to all-trans retinal triggers a conformational change that activates signaling via G-proteins. Subsequent receptor phosphorylation mediates displacement of the bound G-protein alpha subunit by the arrestin SAG and terminates signaling. This Loxodonta africana (African elephant) protein is Rhodopsin (RHO).